The following is a 363-amino-acid chain: NADH-quinone oxidoreductase subunit H (363 aa).

A run of 10 helical transmembrane segments spans residues 29–49, 62–82, 96–116, 127–147, 163–183, 202–222, 238–257, 278–298, 299–319, and 339–359; these read VLKILLIAVPVIVSVAFYVVW, GPMYVGMGIFQAFADVFKLLF, FIIAPLLTLAPAFAAWSVVPF, VGLLYLLAMTSLGVYGIILAG, AAQVVSYEIAMGFALVGVMIA, FFDWFLIPLFPLFIVYWVSGV, EIVAGHMVEYSGGAFALFFL, WLSPIQGWVNADISPWIDWLW, KGGWPWLLMKVFFFASAYIWF, and FIPLTIVWIAVTALMVFYGVI.

Belongs to the complex I subunit 1 family. In terms of assembly, NDH-1 is composed of 14 different subunits. Subunits NuoA, H, J, K, L, M, N constitute the membrane sector of the complex.

It is found in the cell inner membrane. It carries out the reaction a quinone + NADH + 5 H(+)(in) = a quinol + NAD(+) + 4 H(+)(out). In terms of biological role, NDH-1 shuttles electrons from NADH, via FMN and iron-sulfur (Fe-S) centers, to quinones in the respiratory chain. The immediate electron acceptor for the enzyme in this species is believed to be ubiquinone. Couples the redox reaction to proton translocation (for every two electrons transferred, four hydrogen ions are translocated across the cytoplasmic membrane), and thus conserves the redox energy in a proton gradient. This subunit may bind ubiquinone. The polypeptide is NADH-quinone oxidoreductase subunit H (Xanthomonas oryzae pv. oryzae (strain MAFF 311018)).